Reading from the N-terminus, the 758-residue chain is Dachshund homolog 1 (758 aa).

2 disordered regions span residues 1 to 105 (MAVP…SNCN) and 134 to 185 (INAS…TPQN). Over residues 20–53 (ISTSASSSGTTTSTSSATSSPAPSIGPPASSGPT) the composition is skewed to low complexity. Gly residues predominate over residues 73–102 (TGGGGGGGGSGGGGGSSGNGGGGGGGGGGS). Over residues 140-163 (SSSSSSSSSSSSSSSSSSSSSSSS) the composition is skewed to low complexity. The span at 174–185 (STPSPVENTPQN) shows a compositional bias: polar residues. The segment at 189–275 (KMVDLRGAKV…LISRKDFETL (87 aa)) is DACHbox-N. The tract at residues 189-384 (KMVDLRGAKV…VGSSDGSWDK (196 aa)) is interaction with SIX6 and HDAC3. Disordered stretches follow at residues 280-302 (TNASSRPGRPPKRTQSVTSPENS), 358-414 (SNNQ…PLSH), 474-532 (SPPS…RIPV), and 544-564 (MGLSPNVLPGPKEGDLAGHDM). 3 stretches are compositionally biased toward polar residues: residues 292–301 (RTQSVTSPEN), 358–380 (SNNQHGADSENGDMNSSVGSSDG), and 387–399 (LPSSPSQGPQASI). Residue S491 is modified to Phosphoserine. Low complexity predominate over residues 506–524 (SHPSSHRSSSVSSSPARTE). Over residues 555–564 (KEGDLAGHDM) the composition is skewed to basic and acidic residues. The segment at 616–696 (SSIETLLTNI…KAKRKLQEAL (81 aa)) is DACHbox-C. The interval 627–706 (GLLKVAIDNA…EFETKRREQA (80 aa)) is interaction with SIN3A. The stretch at 630 to 718 (KVAIDNARAQ…TLKQAASTDS (89 aa)) forms a coiled coil.

The protein belongs to the DACH/dachshund family. In terms of assembly, interacts with SIX1, SIX6 and EYA3. Interacts with NCOR1 and HDAC3 through its N-terminus. Interacts with SIN3A through its C-terminus. Interacts with SMAD3 and SMAD4. Widely expressed. Isoform 2 is found in brain, heart, kidney, liver, leukocytes and spleen. Isoform 3 is found in liver and heart. Isoform 4 is found in spleen.

It is found in the nucleus. Transcription factor that is involved in regulation of organogenesis. Seems to be a regulator of SIX1, SIX6 and probably SIX5. Corepression of precursor cell proliferation in myoblasts by SIX1 is switched to coactivation through recruitment of EYA3 to the SIX1-DACH1 complex. Transcriptional activation also seems to involve association of CREBBP. Seems to act as a corepressor of SIX6 in regulating proliferation by directly repressing cyclin-dependent kinase inhibitors, including the p27Kip1 promoter. Inhibits TGF-beta signaling through interaction with SMAD4 and NCOR1. Binds to chromatin DNA via its DACHbox-N domain. The chain is Dachshund homolog 1 (DACH1) from Homo sapiens (Human).